The sequence spans 356 residues: Alanine racemase (356 aa).

The active-site Proton acceptor; specific for D-alanine is Lys35. Lys35 carries the post-translational modification N6-(pyridoxal phosphate)lysine. Residue Arg130 participates in substrate binding. The active-site Proton acceptor; specific for L-alanine is Tyr253. Met301 serves as a coordination point for substrate.

This sequence belongs to the alanine racemase family. Pyridoxal 5'-phosphate serves as cofactor.

The enzyme catalyses L-alanine = D-alanine. The protein operates within amino-acid biosynthesis; D-alanine biosynthesis; D-alanine from L-alanine: step 1/1. Catalyzes the interconversion of L-alanine and D-alanine. May also act on other amino acids. The protein is Alanine racemase (alr) of Sodalis glossinidius (strain morsitans).